A 124-amino-acid polypeptide reads, in one-letter code: Large ribosomal subunit protein bL12 (124 aa).

The protein belongs to the bacterial ribosomal protein bL12 family. Homodimer. Part of the ribosomal stalk of the 50S ribosomal subunit. Forms a multimeric L10(L12)X complex, where L10 forms an elongated spine to which 2 to 4 L12 dimers bind in a sequential fashion. Binds GTP-bound translation factors.

Forms part of the ribosomal stalk which helps the ribosome interact with GTP-bound translation factors. Is thus essential for accurate translation. In Leptothrix cholodnii (strain ATCC 51168 / LMG 8142 / SP-6) (Leptothrix discophora (strain SP-6)), this protein is Large ribosomal subunit protein bL12.